The sequence spans 116 residues: Nucleoid-associated protein SACE_0254 (116 aa).

The interval 90–116 (LQQEKMGPVTGALGGGQGLGGLGLPGL) is disordered. Residues 101–116 (ALGGGQGLGGLGLPGL) are compositionally biased toward gly residues.

The protein belongs to the YbaB/EbfC family. Homodimer.

Its subcellular location is the cytoplasm. It localises to the nucleoid. Its function is as follows. Binds to DNA and alters its conformation. May be involved in regulation of gene expression, nucleoid organization and DNA protection. The protein is Nucleoid-associated protein SACE_0254 of Saccharopolyspora erythraea (strain ATCC 11635 / DSM 40517 / JCM 4748 / NBRC 13426 / NCIMB 8594 / NRRL 2338).